The chain runs to 99 residues: Large ribosomal subunit protein eL30 (99 aa).

Belongs to the eukaryotic ribosomal protein eL30 family.

In Methanosarcina acetivorans (strain ATCC 35395 / DSM 2834 / JCM 12185 / C2A), this protein is Large ribosomal subunit protein eL30.